A 96-amino-acid chain; its full sequence is Co-chaperonin GroES (96 aa).

Belongs to the GroES chaperonin family. In terms of assembly, heptamer of 7 subunits arranged in a ring. Interacts with the chaperonin GroEL.

Its subcellular location is the cytoplasm. In terms of biological role, together with the chaperonin GroEL, plays an essential role in assisting protein folding. The GroEL-GroES system forms a nano-cage that allows encapsulation of the non-native substrate proteins and provides a physical environment optimized to promote and accelerate protein folding. GroES binds to the apical surface of the GroEL ring, thereby capping the opening of the GroEL channel. The sequence is that of Co-chaperonin GroES from Thiobacillus denitrificans (strain ATCC 25259 / T1).